The sequence spans 644 residues: uncharacterized protein (644 aa).

254-261 provides a ligand contact to ATP; sequence GKMGAGKS.

This is an uncharacterized protein from Bacillus anthracis.